The primary structure comprises 189 residues: Peptidyl-tRNA hydrolase (189 aa).

A tRNA-binding site is contributed by Tyr14. Residue His19 is the Proton acceptor of the active site. Positions 64, 66, and 112 each coordinate tRNA.

Belongs to the PTH family. As to quaternary structure, monomer.

It is found in the cytoplasm. The enzyme catalyses an N-acyl-L-alpha-aminoacyl-tRNA + H2O = an N-acyl-L-amino acid + a tRNA + H(+). Functionally, hydrolyzes ribosome-free peptidyl-tRNAs (with 1 or more amino acids incorporated), which drop off the ribosome during protein synthesis, or as a result of ribosome stalling. In terms of biological role, catalyzes the release of premature peptidyl moieties from peptidyl-tRNA molecules trapped in stalled 50S ribosomal subunits, and thus maintains levels of free tRNAs and 50S ribosomes. The chain is Peptidyl-tRNA hydrolase from Rhizorhabdus wittichii (strain DSM 6014 / CCUG 31198 / JCM 15750 / NBRC 105917 / EY 4224 / RW1) (Sphingomonas wittichii).